Reading from the N-terminus, the 491-residue chain is Glutamate--tRNA ligase (491 aa).

The 'HIGH' region signature appears at 13 to 23 (PSPTGFLHIGN). Residues cysteine 110, cysteine 112, cysteine 137, and histidine 139 each coordinate Zn(2+). The 'KMSKS' region signature appears at 254-258 (KLSKR). Lysine 257 is a binding site for ATP.

It belongs to the class-I aminoacyl-tRNA synthetase family. Glutamate--tRNA ligase type 1 subfamily. Monomer. The cofactor is Zn(2+).

The protein resides in the cytoplasm. The catalysed reaction is tRNA(Glu) + L-glutamate + ATP = L-glutamyl-tRNA(Glu) + AMP + diphosphate. Functionally, catalyzes the attachment of glutamate to tRNA(Glu) in a two-step reaction: glutamate is first activated by ATP to form Glu-AMP and then transferred to the acceptor end of tRNA(Glu). The sequence is that of Glutamate--tRNA ligase from Listeria monocytogenes serotype 4b (strain F2365).